Here is a 124-residue protein sequence, read N- to C-terminus: Protein MGF 110-4L (124 aa).

The signal sequence occupies residues 1–28 (MLVIFLGILGLLANQVLGLPIQAGGHLC). N-linked (GlcNAc...) asparagine; by host glycosylation occurs at asparagine 64. The Prevents secretion from ER signature appears at 121 to 124 (KEDL).

This sequence belongs to the asfivirus MGF 110 family.

Its subcellular location is the virion. It is found in the host endoplasmic reticulum-Golgi intermediate compartment. In terms of biological role, causes the redistribution of lumenal ER protein to an enlarged ERGIC compartment. This chain is Protein MGF 110-4L, found in Ornithodoros (relapsing fever ticks).